We begin with the raw amino-acid sequence, 88 residues long: Apolipoprotein C-I (88 aa).

Positions 1-26 are cleaved as a signal peptide; sequence MRLILSLPVLAVVLAMVLEGPAPAQA.

This sequence belongs to the apolipoprotein C1 family.

Its subcellular location is the secreted. Functionally, inhibitor of lipoprotein binding to the low density lipoprotein (LDL) receptor, LDL receptor-related protein, and very low density lipoprotein (VLDL) receptor. Associates with high density lipoproteins (HDL) and the triacylglycerol-rich lipoproteins in the plasma and makes up about 10% of the protein of the VLDL and 2% of that of HDL. Appears to interfere directly with fatty acid uptake and is also the major plasma inhibitor of cholesteryl ester transfer protein (CETP). Binds free fatty acids and reduces their intracellular esterification. Modulates the interaction of APOE with beta-migrating VLDL and inhibits binding of beta-VLDL to the LDL receptor-related protein. This Eidolon helvum (Straw-colored fruit bat) protein is Apolipoprotein C-I (APOC1).